The chain runs to 316 residues: Daunorubicin resistance ATP-binding protein DrrA3 (316 aa).

The ABC transporter domain occupies 6–236 (ITVDGAEKRY…TGGDRIDVVL (231 aa)). 38 to 45 (GPNGAGKT) lines the ATP pocket.

The protein belongs to the ABC transporter superfamily. Drug exporter-1 (DrugE1) (TC 3.A.1.105) family. As to quaternary structure, the complex is probably composed of two ATP-binding proteins (DrrA3) and two transmembrane proteins (DrrB3).

It localises to the cell membrane. The catalysed reaction is daunorubicin(in) + ATP + H2O = daunorubicin(out) + ADP + phosphate + H(+). Its function is as follows. Part of the ABC transporter complex DrrA3B3 involved in daunorubicin efflux. Responsible for energy coupling to the transport system. Confers self-resistance to daunorubicin, an antibiotic produced by S.coeruleorubidus. The efficiency of DrrA3B3 to export daunorubicin is probably lower than that of DrrA1B1 or DrrA2B2. The polypeptide is Daunorubicin resistance ATP-binding protein DrrA3 (Streptomyces coeruleorubidus).